The sequence spans 201 residues: Holliday junction branch migration complex subunit RuvA (201 aa).

A domain I region spans residues Met1–Met63. Positions Ser64–Leu142 are domain II. The tract at residues Asn143–Ser153 is flexible linker. The domain III stretch occupies residues Ser153–Ser201.

It belongs to the RuvA family. As to quaternary structure, homotetramer. Forms an RuvA(8)-RuvB(12)-Holliday junction (HJ) complex. HJ DNA is sandwiched between 2 RuvA tetramers; dsDNA enters through RuvA and exits via RuvB. An RuvB hexamer assembles on each DNA strand where it exits the tetramer. Each RuvB hexamer is contacted by two RuvA subunits (via domain III) on 2 adjacent RuvB subunits; this complex drives branch migration. In the full resolvosome a probable DNA-RuvA(4)-RuvB(12)-RuvC(2) complex forms which resolves the HJ.

The protein localises to the cytoplasm. The RuvA-RuvB-RuvC complex processes Holliday junction (HJ) DNA during genetic recombination and DNA repair, while the RuvA-RuvB complex plays an important role in the rescue of blocked DNA replication forks via replication fork reversal (RFR). RuvA specifically binds to HJ cruciform DNA, conferring on it an open structure. The RuvB hexamer acts as an ATP-dependent pump, pulling dsDNA into and through the RuvAB complex. HJ branch migration allows RuvC to scan DNA until it finds its consensus sequence, where it cleaves and resolves the cruciform DNA. This Staphylococcus carnosus (strain TM300) protein is Holliday junction branch migration complex subunit RuvA.